We begin with the raw amino-acid sequence, 128 residues long: MSTFETGSIVKGFYKTGVYIGEITACRPQHYLVKVKAVLTHPAQGDLHHPKQADVPFFHERKALAYGEQTNIPHHMVKPYDGEVPDYTESLREATAQMRAKLNEDGSEWAKRSLHNLDILEKEYFNRP.

The first 25 residues, 1 to 25 (MSTFETGSIVKGFYKTGVYIGEITA), serve as a signal peptide directing secretion. A lipid anchor (N-palmitoyl cysteine) is attached at Cys26. Cys26 carries the S-diacylglycerol cysteine lipid modification.

It is found in the cell membrane. Functionally, may play a role in the activation or the expression of KinB. The sequence is that of Kinase-associated lipoprotein B (kapB) from Bacillus subtilis (strain 168).